The chain runs to 270 residues: Formamidopyrimidine-DNA glycosylase (270 aa).

Pro2 acts as the Schiff-base intermediate with DNA in catalysis. Glu3 (proton donor) is an active-site residue. Lys57 (proton donor; for beta-elimination activity) is an active-site residue. Residues His90, Arg109, and Lys150 each contribute to the DNA site. An FPG-type zinc finger spans residues 235 to 269; sequence LVYGNKDKPCPRCGTKIKSIIIGQRNSFFCPQCQK. Catalysis depends on Arg259, which acts as the Proton donor; for delta-elimination activity.

The protein belongs to the FPG family. Monomer. Zn(2+) serves as cofactor.

It carries out the reaction Hydrolysis of DNA containing ring-opened 7-methylguanine residues, releasing 2,6-diamino-4-hydroxy-5-(N-methyl)formamidopyrimidine.. The catalysed reaction is 2'-deoxyribonucleotide-(2'-deoxyribose 5'-phosphate)-2'-deoxyribonucleotide-DNA = a 3'-end 2'-deoxyribonucleotide-(2,3-dehydro-2,3-deoxyribose 5'-phosphate)-DNA + a 5'-end 5'-phospho-2'-deoxyribonucleoside-DNA + H(+). Its function is as follows. Involved in base excision repair of DNA damaged by oxidation or by mutagenic agents. Acts as a DNA glycosylase that recognizes and removes damaged bases. Has a preference for oxidized purines, such as 7,8-dihydro-8-oxoguanine (8-oxoG). Has AP (apurinic/apyrimidinic) lyase activity and introduces nicks in the DNA strand. Cleaves the DNA backbone by beta-delta elimination to generate a single-strand break at the site of the removed base with both 3'- and 5'-phosphates. The sequence is that of Formamidopyrimidine-DNA glycosylase from Histophilus somni (strain 129Pt) (Haemophilus somnus).